The chain runs to 212 residues: Ribosomal RNA small subunit methyltransferase G (212 aa).

Residues glycine 80, leucine 85, 131-132 (AE), and arginine 146 each bind S-adenosyl-L-methionine.

The protein belongs to the methyltransferase superfamily. RNA methyltransferase RsmG family.

The protein resides in the cytoplasm. The enzyme catalyses guanosine(527) in 16S rRNA + S-adenosyl-L-methionine = N(7)-methylguanosine(527) in 16S rRNA + S-adenosyl-L-homocysteine. Specifically methylates the N7 position of guanine in position 527 of 16S rRNA. The chain is Ribosomal RNA small subunit methyltransferase G from Xanthomonas oryzae pv. oryzae (strain KACC10331 / KXO85).